Here is a 205-residue protein sequence, read N- to C-terminus: Ribosomal RNA large subunit methyltransferase E (205 aa).

Residues glycine 60, tryptophan 62, aspartate 80, aspartate 96, and aspartate 121 each contribute to the S-adenosyl-L-methionine site. Lysine 161 functions as the Proton acceptor in the catalytic mechanism.

It belongs to the class I-like SAM-binding methyltransferase superfamily. RNA methyltransferase RlmE family.

The protein resides in the cytoplasm. It catalyses the reaction uridine(2552) in 23S rRNA + S-adenosyl-L-methionine = 2'-O-methyluridine(2552) in 23S rRNA + S-adenosyl-L-homocysteine + H(+). Its function is as follows. Specifically methylates the uridine in position 2552 of 23S rRNA at the 2'-O position of the ribose in the fully assembled 50S ribosomal subunit. This is Ribosomal RNA large subunit methyltransferase E from Azoarcus sp. (strain BH72).